The chain runs to 824 residues: 4-methylaminobutanoate oxidase (formaldehyde-forming) (824 aa).

The residue at position 67 (His-67) is a Pros-8alpha-FAD histidine.

It belongs to the GcvT family. FAD serves as cofactor.

The catalysed reaction is 4-(methylamino)butanoate + O2 + H2O = 4-aminobutanoate + formaldehyde + H2O2. It participates in alkaloid degradation; nicotine degradation. In terms of biological role, catalyzes the oxidative demethylation of 4-methylaminobutanoate produced from the pyrrolidine ring of nicotine. To a much lesser extent, can also use sarcosine as substrate, but is not active against dimethylglycine, methylaminopropionitrile, methylaminopropylamine, and alpha-methylaminobutanoate. The chain is 4-methylaminobutanoate oxidase (formaldehyde-forming) (abo) from Paenarthrobacter nicotinovorans (Arthrobacter nicotinovorans).